Reading from the N-terminus, the 190-residue chain is Somatotropin (190 aa).

H19 serves as a coordination point for Zn(2+). A disulfide bridge links C52 with C163. Residue S105 is modified to Phosphoserine. E172 provides a ligand contact to Zn(2+). A disulfide bridge connects residues C180 and C188.

Belongs to the somatotropin/prolactin family.

The protein localises to the secreted. Plays an important role in growth control. Its major role in stimulating body growth is to stimulate the liver and other tissues to secrete IGF1. It stimulates both the differentiation and proliferation of myoblasts. It also stimulates amino acid uptake and protein synthesis in muscle and other tissues. This is Somatotropin (GH1) from Vulpes vulpes (Red fox).